The primary structure comprises 302 residues: UDP-N-acetylenolpyruvoylglucosamine reductase (302 aa).

Residues 30-196 (IGGPADLFVE…IAATLEMKKG (167 aa)) enclose the FAD-binding PCMH-type domain. Arg174 is a catalytic residue. Ser225 (proton donor) is an active-site residue. Glu295 is a catalytic residue.

It belongs to the MurB family. FAD serves as cofactor.

The protein resides in the cytoplasm. It catalyses the reaction UDP-N-acetyl-alpha-D-muramate + NADP(+) = UDP-N-acetyl-3-O-(1-carboxyvinyl)-alpha-D-glucosamine + NADPH + H(+). The protein operates within cell wall biogenesis; peptidoglycan biosynthesis. Cell wall formation. This chain is UDP-N-acetylenolpyruvoylglucosamine reductase, found in Anoxybacillus flavithermus (strain DSM 21510 / WK1).